The chain runs to 286 residues: Simplagrin (286 aa).

The N-terminal stretch at 1-20 is a signal peptide; sequence MKKFCLIFLLLALTALHVKG. The interval 17-179 is disordered; that stretch reads HVKGSPIPDE…GSSSGGEESA (163 aa). Composition is skewed to acidic residues over residues 24–69 and 103–129; these read PDEE…DGQE and VESG…TGGE. Asn-116 carries N-linked (GlcNAc...) asparagine glycosylation. The segment covering 166-177 has biased composition (low complexity); that stretch reads SNRAGSSSGGEE.

This sequence belongs to the aegyptin family. In terms of assembly, monomeric in solution; likely has an elongated non-globular form. Interacts with human and rat collagens (via a RGQOGVMGF peptide, where O is hydroxyproline). Post-translationally, not glycosylated. As to expression, salivary gland.

Its subcellular location is the secreted. In terms of biological role, inhibits host platelet aggregation induced by low concentrations of collagen via blocking the von Willebrand Factor (VWF) interaction with collagen. The polypeptide is Simplagrin (Simulium nigrimanum (Black fly)).